The primary structure comprises 157 residues: SsrA-binding protein (157 aa).

The segment at 135-157 (KRDTIKDREGKREVERAMKTNHR) is disordered.

Belongs to the SmpB family.

It is found in the cytoplasm. In terms of biological role, required for rescue of stalled ribosomes mediated by trans-translation. Binds to transfer-messenger RNA (tmRNA), required for stable association of tmRNA with ribosomes. tmRNA and SmpB together mimic tRNA shape, replacing the anticodon stem-loop with SmpB. tmRNA is encoded by the ssrA gene; the 2 termini fold to resemble tRNA(Ala) and it encodes a 'tag peptide', a short internal open reading frame. During trans-translation Ala-aminoacylated tmRNA acts like a tRNA, entering the A-site of stalled ribosomes, displacing the stalled mRNA. The ribosome then switches to translate the ORF on the tmRNA; the nascent peptide is terminated with the 'tag peptide' encoded by the tmRNA and targeted for degradation. The ribosome is freed to recommence translation, which seems to be the essential function of trans-translation. This Albidiferax ferrireducens (strain ATCC BAA-621 / DSM 15236 / T118) (Rhodoferax ferrireducens) protein is SsrA-binding protein.